The chain runs to 302 residues: 4-hydroxy-tetrahydrodipicolinate synthase (302 aa).

A pyruvate-binding site is contributed by Thr55. Tyr144 acts as the Proton donor/acceptor in catalysis. The Schiff-base intermediate with substrate role is filled by Lys172. Residue Val214 participates in pyruvate binding.

It belongs to the DapA family. Homotetramer; dimer of dimers.

The protein localises to the cytoplasm. It carries out the reaction L-aspartate 4-semialdehyde + pyruvate = (2S,4S)-4-hydroxy-2,3,4,5-tetrahydrodipicolinate + H2O + H(+). Its pathway is amino-acid biosynthesis; L-lysine biosynthesis via DAP pathway; (S)-tetrahydrodipicolinate from L-aspartate: step 3/4. Functionally, catalyzes the condensation of (S)-aspartate-beta-semialdehyde [(S)-ASA] and pyruvate to 4-hydroxy-tetrahydrodipicolinate (HTPA). The chain is 4-hydroxy-tetrahydrodipicolinate synthase from Prochlorococcus marinus (strain SARG / CCMP1375 / SS120).